A 248-amino-acid chain; its full sequence is UPF0328 protein ECU06_0030/ECU06_1690/ECU11_0020 (248 aa).

2 disordered regions span residues 1-34 (MVRH…HPSR) and 51-81 (ASAE…ILPD). Polar residues-rich tracts occupy residues 10-19 (PKTTNPNPES) and 61-76 (QNLS…THQS).

The protein belongs to the UPF0328 family.

The protein is UPF0328 protein ECU06_0030/ECU06_1690/ECU11_0020 of Encephalitozoon cuniculi (strain GB-M1) (Microsporidian parasite).